A 626-amino-acid chain; its full sequence is MLKKQVFYGILLICAFVCIYGEDEDEKEAQDEYQPPTVLVALLVRNKAHILPMFLSYLEQQDYPKDRIAFWLRCDHSSDDSIDLLKQWLKHSGDLYHSVNYAFDSDGPHGYQNESSPYDWTVSRFKHVIALKEEAFTYARDIWADFVFFLDADVLLTSQQALRTLTALRLPIVAPMLLSESLYSNFWCGMTEEYYYQRTDEYKEIYHVKKQGSFPVPMVHTAVLVDMNHKGARNLTFDRQRLRDIQQSNQQLDQPLYEGPADDIIVFAMSANSSGIPLHVCNELTFGYILQPLEPGDTLEQDLQMLLNIRASMVSDLGAVPPVLEYFQPLIKTPEKTKLTLDHIFMINLERRPERRQKMENLFEEIGLQVEHFPAVDGKELNADRVQEMGIRFLPGYEDPYHHRAMTMGEIGCFLSHYRIWVRMVQLELKEVLILEDDIRFDPYFRANAVRVLNQARSVVEYDLIYFGRKRLKEESEPWVADADSLVHAGYSYWTLGYVLSLQGALKLLAAKPLEKLIPVDEFLPVMFDRHPNKTWTAAFKKRDLIALSAAPLLLYPIHYTGESGYISDTEDSQQINVQTTEGVARLKSDREQVFVKKGDDGILEQQLKMGESLSNVLPGKTHQEL.

Residues 1 to 21 (MLKKQVFYGILLICAFVCIYG) form the signal peptide. N-linked (GlcNAc...) asparagine glycosylation is found at Asn-113, Asn-234, Asn-272, and Asn-533. Positions 623 to 626 (HQEL) match the Prevents secretion from ER motif.

The protein belongs to the glycosyltransferase 25 family.

Its subcellular location is the endoplasmic reticulum lumen. The polypeptide is Glycosyltransferase 25 family member (Drosophila pseudoobscura pseudoobscura (Fruit fly)).